The sequence spans 201 residues: Holliday junction branch migration complex subunit RuvA (201 aa).

A domain I region spans residues 1-63 (MIAFVSGTVA…EDSLTLYGFA (63 aa)). Residues 64-139 (DDDERQVFEL…RLGEPIGAPA (76 aa)) are domain II. A flexible linker region spans residues 139–143 (AVGAP). The interval 144-201 (VSTGWRDQLHAALIGLGYATREADEAVSAVAPQAEAAGGTPQVGALLKAALQTLNRAR) is domain III.

It belongs to the RuvA family. As to quaternary structure, homotetramer. Forms an RuvA(8)-RuvB(12)-Holliday junction (HJ) complex. HJ DNA is sandwiched between 2 RuvA tetramers; dsDNA enters through RuvA and exits via RuvB. An RuvB hexamer assembles on each DNA strand where it exits the tetramer. Each RuvB hexamer is contacted by two RuvA subunits (via domain III) on 2 adjacent RuvB subunits; this complex drives branch migration. In the full resolvosome a probable DNA-RuvA(4)-RuvB(12)-RuvC(2) complex forms which resolves the HJ.

It is found in the cytoplasm. In terms of biological role, the RuvA-RuvB-RuvC complex processes Holliday junction (HJ) DNA during genetic recombination and DNA repair, while the RuvA-RuvB complex plays an important role in the rescue of blocked DNA replication forks via replication fork reversal (RFR). RuvA specifically binds to HJ cruciform DNA, conferring on it an open structure. The RuvB hexamer acts as an ATP-dependent pump, pulling dsDNA into and through the RuvAB complex. HJ branch migration allows RuvC to scan DNA until it finds its consensus sequence, where it cleaves and resolves the cruciform DNA. The sequence is that of Holliday junction branch migration complex subunit RuvA from Streptomyces coelicolor (strain ATCC BAA-471 / A3(2) / M145).